Consider the following 389-residue polypeptide: POU domain, class 5, transcription factor 3 (389 aa).

2 stretches are compositionally biased toward low complexity: residues 1-18 (MFSPDGGLPAAPFGLLPD) and 145-165 (LANLGSSGSSSGAASEGGHSS). Disordered stretches follow at residues 1–88 (MFSP…APPA) and 145–177 (LANLGSSGSSSGAASEGGHSSDSGDEDAPTSEE). The span at 167-177 (SGDEDAPTSEE) shows a compositional bias: acidic residues. The region spanning 170-244 (EDAPTSEELE…LLQRWLNEAE (75 aa)) is the POU-specific domain. The homeobox DNA-binding region spans 264–323 (KRKRRTSIETNVKGTLESFFRKCVKPSPQEISQIAEDLNLDKDVVRVWFCNRRQKGKRLL).

This sequence belongs to the POU transcription factor family.

The protein resides in the nucleus. Its function is as follows. Required for the maintenance of pluripotency and self-renewal of embryonic stem cells. Transcriptional activator that binds the DNA consensus sequence 5'-ATGCAAAT-3'. The chain is POU domain, class 5, transcription factor 3 (POU5F3) from Gallus gallus (Chicken).